Here is a 950-residue protein sequence, read N- to C-terminus: Leucine--tRNA ligase (950 aa).

The 'HIGH' region motif lies at 72–83 (PYPSGEGLHVGH). A 'KMSKS' region motif is present at residues 722 to 726 (KIGKS). Lysine 725 contacts ATP.

It belongs to the class-I aminoacyl-tRNA synthetase family.

It localises to the cytoplasm. The catalysed reaction is tRNA(Leu) + L-leucine + ATP = L-leucyl-tRNA(Leu) + AMP + diphosphate. The protein is Leucine--tRNA ligase of Mycobacterium sp. (strain KMS).